A 316-amino-acid polypeptide reads, in one-letter code: tRNA methyltransferase 10 homolog B (316 aa).

Positions 73-97 (EKIVAAKKSKRKQEKERRKANRAEN) form a coiled coil. The segment at 77–98 (AAKKSKRKQEKERRKANRAENP) is disordered. The region spanning 113 to 310 (TKDKLLEAKH…KGVSSGKGYI (198 aa)) is the SAM-dependent MTase TRM10-type domain.

It belongs to the class IV-like SAM-binding methyltransferase superfamily. TRM10 family.

It catalyses the reaction guanosine(9) in tRNA + S-adenosyl-L-methionine = N(1)-methylguanosine(9) in tRNA + S-adenosyl-L-homocysteine + H(+). S-adenosyl-L-methionine-dependent guanine N(1)-methyltransferase that catalyzes the formation of N(1)-methylguanine at position 9 (m1G9) in tRNAs. Probably not able to catalyze formation of N(1)-methyladenine at position 9 (m1A9) in tRNAs. This Homo sapiens (Human) protein is tRNA methyltransferase 10 homolog B (TRMT10B).